A 1297-amino-acid polypeptide reads, in one-letter code: Phosphoribosylformylglycinamidine synthase (1297 aa).

The tract at residues 301–329 is disordered; that stretch reads TAISPFPGAATGSGGEIRDEGATGRGAKP. 308–319 serves as a coordination point for ATP; it reads GAATGSGGEIRD. Residues Asp680, Glu719, Asn723, and Asp887 each coordinate Mg(2+). An ATP-binding site is contributed by Ser889. The 253-residue stretch at 1045 to 1297 folds into the Glutamine amidotransferase type-1 domain; it reads IAILREQGVN…RLFRNARMVF (253 aa). Cys1138 serves as the catalytic Nucleophile. Residues His1263 and Glu1265 contribute to the active site.

It in the N-terminal section; belongs to the FGAMS family. As to quaternary structure, monomer.

Its subcellular location is the cytoplasm. The catalysed reaction is N(2)-formyl-N(1)-(5-phospho-beta-D-ribosyl)glycinamide + L-glutamine + ATP + H2O = 2-formamido-N(1)-(5-O-phospho-beta-D-ribosyl)acetamidine + L-glutamate + ADP + phosphate + H(+). It participates in purine metabolism; IMP biosynthesis via de novo pathway; 5-amino-1-(5-phospho-D-ribosyl)imidazole from N(2)-formyl-N(1)-(5-phospho-D-ribosyl)glycinamide: step 1/2. Functionally, phosphoribosylformylglycinamidine synthase involved in the purines biosynthetic pathway. Catalyzes the ATP-dependent conversion of formylglycinamide ribonucleotide (FGAR) and glutamine to yield formylglycinamidine ribonucleotide (FGAM) and glutamate. The sequence is that of Phosphoribosylformylglycinamidine synthase from Haemophilus influenzae (strain ATCC 51907 / DSM 11121 / KW20 / Rd).